Reading from the N-terminus, the 327-residue chain is UPF0285 protein Maeo_0978 (327 aa).

The protein belongs to the UPF0285 family.

This Methanococcus aeolicus (strain ATCC BAA-1280 / DSM 17508 / OCM 812 / Nankai-3) protein is UPF0285 protein Maeo_0978.